The sequence spans 173 residues: Rubredoxin-2 (173 aa).

2 Rubredoxin-like domains span residues 2 to 53 (ASYK…FMLI) and 119 to 170 (YLKW…YVLY). Fe cation is bound by residues cysteine 6, cysteine 9, cysteine 39, cysteine 42, cysteine 124, cysteine 127, cysteine 157, and cysteine 160.

The protein belongs to the rubredoxin family. It depends on Fe(3+) as a cofactor.

It localises to the cytoplasm. The protein operates within hydrocarbon metabolism; alkane degradation. In terms of biological role, involved in the hydrocarbon hydroxylating system, which transfers electrons from NADH to rubredoxin reductase and then through rubredoxin to alkane 1 monooxygenase. The chain is Rubredoxin-2 (alkG) from Ectopseudomonas oleovorans (Pseudomonas oleovorans).